The sequence spans 292 residues: Elongation factor Ts (292 aa).

The segment at threonine 79 to valine 82 is involved in Mg(2+) ion dislocation from EF-Tu.

Belongs to the EF-Ts family.

It is found in the cytoplasm. Associates with the EF-Tu.GDP complex and induces the exchange of GDP to GTP. It remains bound to the aminoacyl-tRNA.EF-Tu.GTP complex up to the GTP hydrolysis stage on the ribosome. This chain is Elongation factor Ts, found in Xanthomonas euvesicatoria pv. vesicatoria (strain 85-10) (Xanthomonas campestris pv. vesicatoria).